Here is a 586-residue protein sequence, read N- to C-terminus: Guanylate-binding protein 5 (586 aa).

An NLRP3-binding region spans residues 1–306 (MALEIHMSDP…TYVNAISSGD (306 aa)). A GTPase domain (Globular) region spans residues 1–309 (MALEIHMSDP…NAISSGDLPC (309 aa)). Positions 35–276 (TQPVVVVAIV…FCSYIFSHSM (242 aa)) constitute a GB1/RHD3-type G domain. GTP-binding positions include 45-52 (GLYRTGKS), 67-69 (VAS), 181-182 (RD), and Leu-245. The tract at residues 529 to 586 (MEIAKQNWLAEQQKMQEQQMQEQAAQLSTTFQAQNRSLLSELQHAQRTVNNDDPCVLL) is required for tetramerization, but not for dimerization. At Cys-583 the chain carries Cysteine methyl ester. Residue Cys-583 is the site of S-geranylgeranyl cysteine attachment. Positions 584–586 (VLL) are cleaved as a propeptide — removed in mature form.

The protein belongs to the TRAFAC class dynamin-like GTPase superfamily. GB1/RHD3 GTPase family. GB1 subfamily. Homodimer; homodimerizes upon GTP-binding, forming a close face-to-face dimer. Heterodimer with other family members, including GBP1, GBP2, GBP3 and GBP4. May also form tetramers (dimer of dimers) in the presence of GTP. Interacts with NLRP3, possibly in its tetrameric form, and promotes PYCARD/ASC polymerization. As to quaternary structure, homodimer; homodimerizes upon GTP-binding. GDP-bound form remains homodimeric. In terms of assembly, homodimer; homodimerizes upon GTP-binding. GDP-bound is monomeric. Post-translationally, isoprenylation is required for proper subcellular location. Expressed in peripheral blood monocytes (at protein level).

The protein localises to the cytoplasmic vesicle membrane. It is found in the golgi apparatus membrane. Its subcellular location is the cytoplasm. It carries out the reaction GTP + H2O = GDP + phosphate + H(+). In terms of biological role, interferon (IFN)-inducible GTPase that plays important roles in innate immunity against a diverse range of bacterial, viral and protozoan pathogens. Hydrolyzes GTP, but in contrast to other family members, does not produce GMP. Following infection, recruited to the pathogen-containing vacuoles or vacuole-escaped bacteria and acts as a positive regulator of inflammasome assembly by promoting the release of inflammasome ligands from bacteria. Acts by promoting lysis of pathogen-containing vacuoles, releasing pathogens into the cytosol. Following pathogen release in the cytosol, promotes recruitment of proteins that mediate bacterial cytolysis: this liberates ligands that are detected by inflammasomes, such as lipopolysaccharide (LPS) that activates the non-canonical CASP4/CASP11 inflammasome or double-stranded DNA (dsDNA) that activates the AIM2 inflammasome. As an activator of NLRP3 inflammasome assembly: promotes selective NLRP3 inflammasome assembly in response to microbial and soluble, but not crystalline, agents. Independently of its GTPase activity, acts as an inhibitor of various viruses infectivity, such as HIV-1, Zika and influenza A viruses, by inhibiting FURIN-mediated maturation of viral envelope proteins. Antigenic tumor-specific truncated splice form. In Homo sapiens (Human), this protein is Guanylate-binding protein 5.